Here is a 505-residue protein sequence, read N- to C-terminus: Maturase K (505 aa).

The protein belongs to the intron maturase 2 family. MatK subfamily.

The protein resides in the plastid. It is found in the chloroplast. Its function is as follows. Usually encoded in the trnK tRNA gene intron. Probably assists in splicing its own and other chloroplast group II introns. This is Maturase K from Micranthes integrifolia (Wholeleaf saxifrage).